The chain runs to 690 residues: Protein AC23 (690 aa).

The N-terminal stretch at 1-37 (MLACKFSQYQAFIMDGVKLLGTCALIILLSTTSTVVG) is a signal peptide.

It localises to the virion. Its function is as follows. Pathogenicity factor that accelerates mortality in the host insect. The protein is Protein AC23 of Autographa californica nuclear polyhedrosis virus (AcMNPV).